The chain runs to 194 residues: Potassium-transporting ATPase KdpC subunit (194 aa).

Residues 12 to 34 (LFLLLLTGGVYPLLTTALGQWWF) form a helical membrane-spanning segment.

This sequence belongs to the KdpC family. The system is composed of three essential subunits: KdpA, KdpB and KdpC.

It localises to the cell inner membrane. Functionally, part of the high-affinity ATP-driven potassium transport (or Kdp) system, which catalyzes the hydrolysis of ATP coupled with the electrogenic transport of potassium into the cytoplasm. This subunit acts as a catalytic chaperone that increases the ATP-binding affinity of the ATP-hydrolyzing subunit KdpB by the formation of a transient KdpB/KdpC/ATP ternary complex. The protein is Potassium-transporting ATPase KdpC subunit of Salmonella schwarzengrund (strain CVM19633).